Reading from the N-terminus, the 474-residue chain is Lactococcin A secretion protein LcnD (474 aa).

At 1–21 the chain is on the cytoplasmic side; it reads MFDKKLLESSELYDKRYRNFS. The chain crosses the membrane as a helical span at residues 22 to 44; sequence TLIILPLFILLVGGVIFTFFAHK. The Extracellular portion of the chain corresponds to 45–474; that stretch reads ELTVISTGSI…LDKIMGRGNQ (430 aa).

The protein belongs to the membrane fusion protein (MFP) (TC 8.A.1) family.

It localises to the cell membrane. Involved in the secretion of lactococcin A. In Lactococcus lactis subsp. cremoris (Streptococcus cremoris), this protein is Lactococcin A secretion protein LcnD (lcnD).